A 245-amino-acid polypeptide reads, in one-letter code: Ubiquinone/menaquinone biosynthesis C-methyltransferase UbiE (245 aa).

S-adenosyl-L-methionine is bound by residues threonine 71, aspartate 92, and aspartate 118 to alanine 119.

This sequence belongs to the class I-like SAM-binding methyltransferase superfamily. MenG/UbiE family.

The enzyme catalyses a 2-demethylmenaquinol + S-adenosyl-L-methionine = a menaquinol + S-adenosyl-L-homocysteine + H(+). The catalysed reaction is a 2-methoxy-6-(all-trans-polyprenyl)benzene-1,4-diol + S-adenosyl-L-methionine = a 5-methoxy-2-methyl-3-(all-trans-polyprenyl)benzene-1,4-diol + S-adenosyl-L-homocysteine + H(+). The protein operates within quinol/quinone metabolism; menaquinone biosynthesis; menaquinol from 1,4-dihydroxy-2-naphthoate: step 2/2. It participates in cofactor biosynthesis; ubiquinone biosynthesis. Functionally, methyltransferase required for the conversion of demethylmenaquinol (DMKH2) to menaquinol (MKH2) and the conversion of 2-polyprenyl-6-methoxy-1,4-benzoquinol (DDMQH2) to 2-polyprenyl-3-methyl-6-methoxy-1,4-benzoquinol (DMQH2). The protein is Ubiquinone/menaquinone biosynthesis C-methyltransferase UbiE of Neisseria meningitidis serogroup C (strain 053442).